The following is a 207-amino-acid chain: MSYSGERDNLAPHMALVPMVIEQTSRGERSFDIYSRLLKERVIFLTGQVEDHMANLIVAQMLFLEAENPEKDIYLYINSPGGVITAGISIYDTMQFIKPDVSTICMGQAASMGAFLLTAGAKGKRFCLPNSRVMIHQPLGGYQGQATDIEIHAREILKVKGRMNELMAHHTGQSLEQIERDTERDRFLSAPEAVEYGLVDSILTHRN.

The propeptide occupies 1–14; sequence MSYSGERDNLAPHM. The active-site Nucleophile is serine 111. Histidine 136 is a catalytic residue.

Belongs to the peptidase S14 family. Fourteen ClpP subunits assemble into 2 heptameric rings which stack back to back to give a disk-like structure with a central cavity, resembling the structure of eukaryotic proteasomes. Component of the ClpAP and ClpXP complexes.

The protein localises to the cytoplasm. It catalyses the reaction Hydrolysis of proteins to small peptides in the presence of ATP and magnesium. alpha-casein is the usual test substrate. In the absence of ATP, only oligopeptides shorter than five residues are hydrolyzed (such as succinyl-Leu-Tyr-|-NHMec, and Leu-Tyr-Leu-|-Tyr-Trp, in which cleavage of the -Tyr-|-Leu- and -Tyr-|-Trp bonds also occurs).. Its function is as follows. Cleaves peptides in various proteins in a process that requires ATP hydrolysis. Has a chymotrypsin-like activity. Plays a major role in the degradation of misfolded proteins. The polypeptide is ATP-dependent Clp protease proteolytic subunit (Salmonella paratyphi A (strain ATCC 9150 / SARB42)).